Here is a 635-residue protein sequence, read N- to C-terminus: Moesin/ezrin/radixin homolog 2 (635 aa).

The FERM domain occupies 12–305 (LSVRVSTFDS…GNHDLYMRRR (294 aa)).

Interacts with Moe and arm at the adherens junction. Forms a complex with Kibra and Ex. Interacts (via FERM domain) with Sav (via FBM motif). Interacts with Schip1. Expressed predominantly in the germline. Expressed in the developing oocyte from stage 6 to the end of oogenesis and in the apical ends of follical cells from stage 10. Ubiquitous expression throughout embryogenesis with enhanced expression in mesoderm of early embryos and midgut of late embryos. In embryonic CNS, expression is seen in neuropil and developing brain and is enhanced in neuronal cell bodies. In embryonic PNS, expression is seen within the cell body. In third instar larvae, expression is uniform in the eye imaginal disk and is enhanced at the morphogenetic furrow. In pupal eyes, expression is seen in the cytoplasm of secondary and tertiary pigment cells, bristle precursor cells and rhabdomeres.

The protein localises to the cell junction. It is found in the adherens junction. It localises to the cell membrane. The protein resides in the cytoplasm. Its subcellular location is the cytoskeleton. The protein localises to the apical cell membrane. It is found in the cell projection. It localises to the rhabdomere. In terms of biological role, regulator of the Hippo/SWH (Sav/Wts/Hpo) signaling pathway, a signaling pathway that plays a pivotal role in organ size control and tumor suppression by restricting proliferation and promoting apoptosis. The core of this pathway is composed of a kinase cascade wherein Hippo (Hpo), in complex with its regulatory protein Salvador (Sav), phosphorylates and activates Warts (Wts) in complex with its regulatory protein Mats, which in turn phosphorylates and inactivates the Yorkie (Yki) oncoprotein. Mer acts synergistically along with Ex and Kibra to regulate the Hippo signaling pathway. The chain is Moesin/ezrin/radixin homolog 2 (Mer) from Drosophila melanogaster (Fruit fly).